The chain runs to 609 residues: MSSPRDRVNAFYKDNLQFKNTRVVLNKEQLLIERPYMLLAVLFVMFLSLVGLLAIAGIRLHRAAVNTAEINSGLTTSIDITKSIEYQVKDVLTPLFKIIGDEVGLRTPQRFTDLTKFISDKIKFLNPDKEYDFRDINWCISPPERIKINYDQYCAHTAAEELITMLVNSSLAGTSVLPTSLVNLGRSCTGSTTTKGQFSNMSLALSGIYSGRGYNISSMITITEKGMYGSTYLVGKHNQGARRPSTAWQRDYRVFEVGIIRELGLGTPVFHMTNYLELPRQPELEICMLALGEFKLAALCLADNSVALHYGGLRDDHKIRFVKLGVWPSPADSDTLATLSAVDPTLDGLYITTHRGIIAAGKAVWVVPVTRTDDQRKMGQCRREACREKPPPFCNSTDWEPLEAGRIPAYGILTIRLGLADKLKLTIISEFGPLITHDSGMDLYTPLDGNEYWLTIPPLQNSALGTVNTLVLEPSLKISPNILTLPIRSGGGDCYTPTYLSDLADDDVKLSSNLVILPSRNLQYVSATYDTSRVEHAIVYYIYSAGRLSSYYYPVKLPIKGDPVSLQIGCFPWGLKLWCHHFCSVIDSGTRKQVTHTGAVGIEITCNSR.

Residues 1-34 (MSSPRDRVNAFYKDNLQFKNTRVVLNKEQLLIER) are Intravirion-facing. A helical; Signal-anchor for type II membrane protein transmembrane segment spans residues 35 to 58 (PYMLLAVLFVMFLSLVGLLAIAGI). At 59–609 (RLHRAAVNTA…VGIEITCNSR (551 aa)) the chain is on the virion surface side. Residues Asn-168, Asn-200, Asn-215, and Asn-395 are each glycosylated (N-linked (GlcNAc...) asparagine; by host).

It belongs to the paramyxoviruses hemagglutinin-neuraminidase family. Non-sialidase subfamily.

The protein localises to the virion membrane. Its subcellular location is the host membrane. Attaches the virus to cell receptors and thereby initiating infection. Binding of H protein to the receptor induces a conformational change that allows the F protein to trigger virion/cell membranes fusion. Down-regulates human MCP/CD46 cell surface expression. This chain is Hemagglutinin glycoprotein (H), found in Rinderpest virus (strain L) (RDV).